Reading from the N-terminus, the 538-residue chain is Chaperonin GroEL (538 aa).

ATP is bound by residues 29–32, 86–90, G413, 476–478, and D492; these read TIGP, DGTTT, and NAA.

It belongs to the chaperonin (HSP60) family. As to quaternary structure, forms a cylinder of 14 subunits composed of two heptameric rings stacked back-to-back. Interacts with the co-chaperonin GroES.

The protein localises to the cytoplasm. It carries out the reaction ATP + H2O + a folded polypeptide = ADP + phosphate + an unfolded polypeptide.. Together with its co-chaperonin GroES, plays an essential role in assisting protein folding. The GroEL-GroES system forms a nano-cage that allows encapsulation of the non-native substrate proteins and provides a physical environment optimized to promote and accelerate protein folding. This is Chaperonin GroEL from Staphylococcus aureus (strain NCTC 8325 / PS 47).